The following is a 273-amino-acid chain: 2-dehydro-3-deoxyphosphooctonate aldolase (273 aa).

This sequence belongs to the KdsA family.

It localises to the cytoplasm. The catalysed reaction is D-arabinose 5-phosphate + phosphoenolpyruvate + H2O = 3-deoxy-alpha-D-manno-2-octulosonate-8-phosphate + phosphate. It functions in the pathway carbohydrate biosynthesis; 3-deoxy-D-manno-octulosonate biosynthesis; 3-deoxy-D-manno-octulosonate from D-ribulose 5-phosphate: step 2/3. It participates in bacterial outer membrane biogenesis; lipopolysaccharide biosynthesis. The polypeptide is 2-dehydro-3-deoxyphosphooctonate aldolase (Cyanothece sp. (strain PCC 7425 / ATCC 29141)).